Consider the following 122-residue polypeptide: Cofilin/actin-depolymerizing factor homolog 1 (122 aa).

An ADF-H domain is found at 4–122 (GIRVNDNCVT…ESAQDVADLK (119 aa)).

This sequence belongs to the actin-binding proteins ADF family. Interacts with monomeric actin, does not bind to actin polymers.

The protein localises to the cytoplasm. It localises to the cytoskeleton. Its function is as follows. Not involved in actin polymerisation, instead functions to stimulate nucleotide exchange on monomeric actin and influence turnover of the small amount of cytosolic actin microfilaments. Essential for erythrocytic schizogony. The polypeptide is Cofilin/actin-depolymerizing factor homolog 1 (Plasmodium falciparum (isolate 3D7)).